The sequence spans 243 residues: MEDKPMTLFEHLEALRKVIIISVIAIVIGSIIAYNYVDYFLNILLQPVTALKMKLVFINVTEAFMTKLKIAIILGIILASPIILWQIWSFVAPGLKPAERKFILRMIPVIIILFVAGIVFAFFTVFQIATRFLLQFGGDIMSPMITIGKYISFALNFLIPFGLVFELPVVVYILAKLNIISHEFLVKNRKYALLVVFILAAALTPGPDVISQLLMAAPLLILYEVSIFIAKFIKPKEFSGERK.

7 consecutive transmembrane segments (helical) span residues 18 to 38 (VIIISVIAIVIGSIIAYNYVD), 70 to 90 (IAIILGIILASPIILWQIWSF), 106 to 126 (MIPVIIILFVAGIVFAFFTVF), 132 to 152 (FLLQFGGDIMSPMITIGKYIS), 153 to 173 (FALNFLIPFGLVFELPVVVYI), 191 to 211 (YALLVVFILAAALTPGPDVIS), and 213 to 233 (LLMAAPLLILYEVSIFIAKFI).

Belongs to the TatC family. In terms of assembly, forms a complex with TatA.

It is found in the cell membrane. Part of the twin-arginine translocation (Tat) system that transports large folded proteins containing a characteristic twin-arginine motif in their signal peptide across membranes. The protein is Sec-independent protein translocase protein TatC of Carboxydothermus hydrogenoformans (strain ATCC BAA-161 / DSM 6008 / Z-2901).